Here is a 639-residue protein sequence, read N- to C-terminus: RNA polymerase II elongation factor ELL2 (639 aa).

Disordered stretches follow at residues 175–203, 291–326, 378–416, and 439–513; these read DTVP…SVSQ, LNPS…SDFI, PSTH…SFSQ, and PSSA…EGCT. The span at 291–317 shows a compositional bias: polar residues; the sequence is LNPSQNASTSRSESPLCSSKDAASSPQ. Residues 378–401 are compositionally biased toward low complexity; that stretch reads PSTHLPVSNPPQTVNSNSNSPSTP. Residues 457-469 are compositionally biased toward basic residues; it reads SHKKSKKKSKKHK. The segment covering 470–479 has biased composition (basic and acidic residues); sequence EKDQIKKLDI. Residues 480 to 490 are compositionally biased toward acidic residues; it reads ETMEEKEEDLQ. Serine 501 and serine 579 each carry phosphoserine. Positions 525-635 constitute an OCEL domain; sequence PDYLIKYIAI…LIGEFDQQQA (111 aa).

It belongs to the ELL/occludin family. In terms of assembly, component of the super elongation complex (SEC), at least composed of EAF1, EAF2, CDK9, MLLT3/AF9, AFF (AFF1 or AFF4), the P-TEFb complex and ELL (ELL, ELL2 or ELL3). Component of the little elongation complex (LEC), at least composed of ELL (ELL, ELL2 or ELL3), ZC3H8, ICE1 and ICE2. Interacts with AFF4; the interaction is direct and leads to stabilize ELL2 and prevent ELL2 ubiquitination. Interacts with EAF1 and EAF2. Ubiquitinated by SIAH1, leading to its degradation by the proteasome. Interaction with AFF4 stabilizes ELL2 and prevents ELL2 ubiquitination.

The protein resides in the nucleus. Elongation factor component of the super elongation complex (SEC), a complex required to increase the catalytic rate of RNA polymerase II transcription by suppressing transient pausing by the polymerase at multiple sites along the DNA. Component of the little elongation complex (LEC), a complex required to regulate small nuclear RNA (snRNA) gene transcription by RNA polymerase II and III. Plays a role in immunoglobulin secretion in plasma cells: directs efficient alternative mRNA processing, influencing both proximal poly(A) site choice and exon skipping, as well as immunoglobulin heavy chain (IgH) alternative processing. Probably acts by regulating histone modifications accompanying transition from membrane-specific to secretory IgH mRNA expression. The sequence is that of RNA polymerase II elongation factor ELL2 (Ell2) from Mus musculus (Mouse).